The primary structure comprises 429 residues: MYRLIQNGQLLIDDQLVKRDIAIDEKGRITAIEAQITPTDEPTETIFDAQGALVSAGLIDGHVHFRDPGFTDKETLQTGSQAAAHGGYTSVIAMPNLNPVPDNLSDFKTLVARNQTETSVHTYQFAPITGDLVNNDLVDMPAFKAAGAAGFTNDGHGVQDAQTMYLAMQQAAAIDAPIVAHVEDISLVNGGVIHDGAAAKRLNVPGIPSVSESAQVARDIELARATGVHYHICHISTKETVALVRRAKADGVNITCEVTPHHLLLDDRSIISDDTMLKMNPPLRTLADRQSLWAGLMDGTIDVIATDHAPHTAAEKSQSLLQAPFGIVGSETAFSLLYTHLVVNGPFSLAQLLAKMTTVPAQVFNLPAAGQLRVGDQADIAVFNLTQPTTIQATDFQSKGHNTPFIGETVLGGTELTLVAGQVAYQRSK.

Zn(2+)-binding residues include His62 and His64. Substrate contacts are provided by residues 64-66 (HFR) and Asn96. Residues Asp154, His181, and His234 each coordinate Zn(2+). Residue Asn280 coordinates substrate. Asp307 is a Zn(2+) binding site. The active site involves Asp307. Substrate contacts are provided by residues His311 and 325–326 (FG).

It belongs to the metallo-dependent hydrolases superfamily. DHOase family. Class I DHOase subfamily. Requires Zn(2+) as cofactor.

It catalyses the reaction (S)-dihydroorotate + H2O = N-carbamoyl-L-aspartate + H(+). Its pathway is pyrimidine metabolism; UMP biosynthesis via de novo pathway; (S)-dihydroorotate from bicarbonate: step 3/3. Functionally, catalyzes the reversible cyclization of carbamoyl aspartate to dihydroorotate. The protein is Dihydroorotase of Latilactobacillus sakei subsp. sakei (strain 23K) (Lactobacillus sakei subsp. sakei).